Here is a 253-residue protein sequence, read N- to C-terminus: Triosephosphate isomerase (253 aa).

Residue 9-11 (NWK) participates in substrate binding. Residue His97 is the Electrophile of the active site. The Proton acceptor role is filled by Glu169. Substrate-binding positions include Gly175, Ser215, and 236-237 (GG).

It belongs to the triosephosphate isomerase family. In terms of assembly, homodimer.

It localises to the cytoplasm. The enzyme catalyses D-glyceraldehyde 3-phosphate = dihydroxyacetone phosphate. Its pathway is carbohydrate biosynthesis; gluconeogenesis. It functions in the pathway carbohydrate degradation; glycolysis; D-glyceraldehyde 3-phosphate from glycerone phosphate: step 1/1. Its function is as follows. Involved in the gluconeogenesis. Catalyzes stereospecifically the conversion of dihydroxyacetone phosphate (DHAP) to D-glyceraldehyde-3-phosphate (G3P). In Staphylococcus saprophyticus subsp. saprophyticus (strain ATCC 15305 / DSM 20229 / NCIMB 8711 / NCTC 7292 / S-41), this protein is Triosephosphate isomerase.